The following is a 75-amino-acid chain: Putative primary metabolism protein HVA1 (75 aa).

Positions 1-13 (MSVQDKQGQNINV) are enriched in polar residues. 2 disordered regions span residues 1 to 24 (MSVQ…YRGG) and 40 to 75 (AAEK…DKQK).

Its function is as follows. May play a role in primary metabolism. This Cryptococcus neoformans var. grubii serotype A (strain H99 / ATCC 208821 / CBS 10515 / FGSC 9487) (Filobasidiella neoformans var. grubii) protein is Putative primary metabolism protein HVA1.